A 71-amino-acid polypeptide reads, in one-letter code: DNA-directed RNA polymerases I, II, and III subunit RPABC5 (71 aa).

Residues Cys7, Cys10, Cys44, and Cys45 each contribute to the Zn(2+) site.

Belongs to the archaeal Rpo10/eukaryotic RPB10 RNA polymerase subunit family. In terms of assembly, component of the RNA polymerase I (Pol I), RNA polymerase II (Pol II) and RNA polymerase III (Pol III) complexes consisting of at least 13, 12 and 17 subunits, respectively.

Its subcellular location is the nucleus. Its function is as follows. DNA-dependent RNA polymerase catalyzes the transcription of DNA into RNA using the four ribonucleoside triphosphates as substrates. Common component of RNA polymerases I, II and III which synthesize ribosomal RNA precursors, mRNA precursors and many functional non-coding RNAs, and a small RNAs, such as 5S rRNA and tRNAs, respectively. Pol II is the central component of the basal RNA polymerase II transcription machinery. Pols are composed of mobile elements that move relative to each other. In Pol II, RBP10 is part of the core element with the central large cleft. The sequence is that of DNA-directed RNA polymerases I, II, and III subunit RPABC5 from Brassica napus (Rape).